A 509-amino-acid chain; its full sequence is Bestrophin-2a (509 aa).

Topologically, residues 1-31 (MTVTYTARVANARFGGFSQLLLLWRGSIYKL) are cytoplasmic. Ala-10 contributes to the Ca(2+) binding site. A helical transmembrane segment spans residues 32-51 (LWRELLCFLGFYMALSAAYR). Topologically, residues 52 to 60 (FVLTEGQKR) are extracellular. The helical transmembrane segment at 61 to 82 (YFEKLVIYCDQYASLIPVSFVL) threads the bilayer. The Cytoplasmic segment spans residues 83-238 (GFYVTLVVNR…WISVPLVYTQ (156 aa)). Residues 239 to 255 (VVTIALYSYFLACLIGR) traverse the membrane as a helical segment. The Extracellular segment spans residues 256–274 (QFLDPAQGYKDHDLDLCVP). A helical membrane pass occupies residues 275–288 (IFTLLQFFFYAGWL). Topologically, residues 289 to 509 (KVAEQLINPF…PIGEEEENLA (221 aa)) are cytoplasmic. Ca(2+) contacts are provided by Gln-293, Asn-296, Asp-301, and Asp-304. A disordered region spans residues 454–509 (DPGLPEPEAPPPAGPEPLTLIPGPVEPFSIVTMPGPRGPAPPWLPSPIGEEEENLA). Pro residues-rich tracts occupy residues 457–468 (LPEPEAPPPAGP) and 489–498 (PRGPAPPWLP).

Belongs to the anion channel-forming bestrophin (TC 1.A.46) family. Calcium-sensitive chloride channel subfamily. In terms of assembly, pentamer. Interacts with GLUL; this interaction tethers a fraction of GLUL to the membrane, causing a decrease of cytosolic glutamine synthase (GS) activity and inhibits the chloride channel activity of BEST2 by affecting the gating at the aperture in the absence of intracellular glutamate. In terms of tissue distribution, mainly confined to the retinal pigment epithelium. Expressed in colon.

The protein localises to the cell membrane. It is found in the basolateral cell membrane. It catalyses the reaction chloride(in) = chloride(out). The catalysed reaction is hydrogencarbonate(in) = hydrogencarbonate(out). It carries out the reaction L-glutamate(out) = L-glutamate(in). The enzyme catalyses iodide(out) = iodide(in). It catalyses the reaction L-glutamine(out) = L-glutamine(in). Chloride channel activity is allosterically inhibited by GLUL/glutamine synthase (GS) which affects the gating at the aperture in the absence of intracellular glutamate. Inhibitory effect of GLUL is relieved upon increasing of L-glutamate intracellular level. Functionally, ligand-gated anion channel that allows the movement of anions across cell membranes when activated by calcium (Ca2+). Transports a large specter of anions, namely mediates the movement of chloride, L-glutamate and iodide. Calcium-binding triggers the dilation of the aperture, but calcium-dependent gating is only effective when the size of the passing anion is bigger than the closed aperture. Mediates the calcium-activated hydrogencarbonate movement and participates in colonic hydrogencarbonate secretion concomitant with mucin secretion. In non-pigmented epithelium (NPE), mediates the efflux of intracellular L-glutamate; binding of intracellular L-glutamate activates and open both the neck and the aperture of the channel, leading to L-glutamate exit promoting chloride influx movement from the extracellular side in trans. Also exhibits a directional permeability for intracellular glutamine, in a similar manner as for L-glutamate. This Homo sapiens (Human) protein is Bestrophin-2a.